The chain runs to 369 residues: MSGNTLGLLFTVTTFGESHGPAIGAVVDGCPPGMSLTEADIQIDLDRRKPGTSRHVTQRQEADQVEILSGVFEGKTTGTPICLLIRNTDQRSKDYGNIVETFRPGHADYTYWHKYGIRDYRGGGRSSARLTAPVVAAAAIAKKWLNEQYGTEIRGYMSQLGEVEVPFTDWKHVPENPFFAANADIVPELETYMDALRRDGDSVGARIEVVASHVPVGLGEPLFDKLDADIAHAMMGINAVKGVEIGAGFDSVSQRGTVHGDELTPEGFRTNNSGGVLGGISTGQDIKVSLAIKPTSSIRTARESIDKAGSPASVETFGRHDPCVGIRATPIAEAMLALVLMDHALRHRAQCGDVRVDTPRIPAQAPGKS.

Residues Arg48 and Arg54 each coordinate NADP(+). Residues 125–127, 238–239, Gly278, 293–297, and Arg319 contribute to the FMN site; these read RSS, NA, and KPTSS.

Belongs to the chorismate synthase family. In terms of assembly, homotetramer. FMNH2 is required as a cofactor.

It carries out the reaction 5-O-(1-carboxyvinyl)-3-phosphoshikimate = chorismate + phosphate. It participates in metabolic intermediate biosynthesis; chorismate biosynthesis; chorismate from D-erythrose 4-phosphate and phosphoenolpyruvate: step 7/7. Functionally, catalyzes the anti-1,4-elimination of the C-3 phosphate and the C-6 proR hydrogen from 5-enolpyruvylshikimate-3-phosphate (EPSP) to yield chorismate, which is the branch point compound that serves as the starting substrate for the three terminal pathways of aromatic amino acid biosynthesis. This reaction introduces a second double bond into the aromatic ring system. This is Chorismate synthase from Cupriavidus metallidurans (strain ATCC 43123 / DSM 2839 / NBRC 102507 / CH34) (Ralstonia metallidurans).